The chain runs to 717 residues: Glycine--tRNA ligase beta subunit (717 aa).

The protein belongs to the class-II aminoacyl-tRNA synthetase family. As to quaternary structure, tetramer of two alpha and two beta subunits.

Its subcellular location is the cytoplasm. It catalyses the reaction tRNA(Gly) + glycine + ATP = glycyl-tRNA(Gly) + AMP + diphosphate. This chain is Glycine--tRNA ligase beta subunit, found in Agrobacterium fabrum (strain C58 / ATCC 33970) (Agrobacterium tumefaciens (strain C58)).